Here is a 472-residue protein sequence, read N- to C-terminus: Glutamate--tRNA ligase (472 aa).

Positions 9 to 19 (PSPTGPLHIGS) match the 'HIGH' region motif. The 'KMSKS' region signature appears at 237 to 241 (KLSKR). Lys-240 is an ATP binding site.

Belongs to the class-I aminoacyl-tRNA synthetase family. Glutamate--tRNA ligase type 1 subfamily. As to quaternary structure, monomer.

The protein resides in the cytoplasm. The catalysed reaction is tRNA(Glu) + L-glutamate + ATP = L-glutamyl-tRNA(Glu) + AMP + diphosphate. In terms of biological role, catalyzes the attachment of glutamate to tRNA(Glu) in a two-step reaction: glutamate is first activated by ATP to form Glu-AMP and then transferred to the acceptor end of tRNA(Glu). The protein is Glutamate--tRNA ligase of Buchnera aphidicola subsp. Baizongia pistaciae (strain Bp).